The primary structure comprises 215 residues: Cytochrome c biogenesis ATP-binding export protein CcmA (215 aa).

Residues 7–209 (LKIDRLACQR…ALTVLNLAQY (203 aa)) enclose the ABC transporter domain. 39–46 (GHNGIGKT) lines the ATP pocket.

Belongs to the ABC transporter superfamily. CcmA exporter (TC 3.A.1.107) family. In terms of assembly, the complex is composed of two ATP-binding proteins (CcmA) and two transmembrane proteins (CcmB).

It is found in the cell inner membrane. The enzyme catalyses heme b(in) + ATP + H2O = heme b(out) + ADP + phosphate + H(+). Part of the ABC transporter complex CcmAB involved in the biogenesis of c-type cytochromes; once thought to export heme, this seems not to be the case, but its exact role is uncertain. Responsible for energy coupling to the transport system. The protein is Cytochrome c biogenesis ATP-binding export protein CcmA of Mannheimia succiniciproducens (strain KCTC 0769BP / MBEL55E).